A 516-amino-acid polypeptide reads, in one-letter code: Acetylcholine receptor subunit delta (516 aa).

The first 21 residues, 1–21 (MEGSVLTLVLLAALVVCGSWG), serve as a signal peptide directing secretion. Residues 22 to 244 (LNEEERLIRH…VTFYLIIRRK (223 aa)) are Extracellular-facing. Asn96 and Asn163 each carry an N-linked (GlcNAc...) asparagine glycan. Cys150 and Cys164 are oxidised to a cystine. Helical transmembrane passes span 245–269 (PLFY…VFYL), 279–296 (MAIS…LISK), and 311–332 (FLLF…VLNI). Residues 333–470 (HFRTPSTHVL…WNRVARTVDR (138 aa)) lie on the Cytoplasmic side of the membrane. Tyr389 carries the phosphotyrosine; by Tyr-kinases modification. A helical membrane pass occupies residues 471–493 (LCLFVVTPIMVVGTAWIFLQGAY).

The protein belongs to the ligand-gated ion channel (TC 1.A.9) family. Acetylcholine receptor (TC 1.A.9.1) subfamily. Delta/CHRND sub-subfamily. In terms of assembly, pentamer of two alpha chains, and one each of the beta, delta, and gamma (in immature muscle) or epsilon (in mature muscle) chains. The muscle heteropentamer composed of alpha-1, beta-1, delta, epsilon subunits interacts with the alpha-conotoxin ImII.

The protein localises to the postsynaptic cell membrane. The protein resides in the cell membrane. The catalysed reaction is K(+)(in) = K(+)(out). It catalyses the reaction Na(+)(in) = Na(+)(out). After binding acetylcholine, the AChR responds by an extensive change in conformation that affects all subunits and leads to opening of an ion-conducting channel across the plasma membrane. In Bos taurus (Bovine), this protein is Acetylcholine receptor subunit delta (CHRND).